Here is a 391-residue protein sequence, read N- to C-terminus: Tryptophan synthase beta chain (391 aa).

Residue Lys-84 is modified to N6-(pyridoxal phosphate)lysine.

Belongs to the TrpB family. Tetramer of two alpha and two beta chains. The cofactor is pyridoxal 5'-phosphate.

The catalysed reaction is (1S,2R)-1-C-(indol-3-yl)glycerol 3-phosphate + L-serine = D-glyceraldehyde 3-phosphate + L-tryptophan + H2O. The protein operates within amino-acid biosynthesis; L-tryptophan biosynthesis; L-tryptophan from chorismate: step 5/5. Its function is as follows. The beta subunit is responsible for the synthesis of L-tryptophan from indole and L-serine. The protein is Tryptophan synthase beta chain of Thermoanaerobacter pseudethanolicus (strain ATCC 33223 / 39E) (Clostridium thermohydrosulfuricum).